The sequence spans 263 residues: Glucosamine-6-phosphate deaminase (263 aa).

Residue D72 is the Proton acceptor; for enolization step of the active site. Catalysis depends on D141, which acts as the For ring-opening step. H143 (proton acceptor; for ring-opening step) is an active-site residue. The active-site For ring-opening step is the E148.

This sequence belongs to the glucosamine/galactosamine-6-phosphate isomerase family. NagB subfamily.

The enzyme catalyses alpha-D-glucosamine 6-phosphate + H2O = beta-D-fructose 6-phosphate + NH4(+). It participates in amino-sugar metabolism; N-acetylneuraminate degradation; D-fructose 6-phosphate from N-acetylneuraminate: step 5/5. Allosterically activated by N-acetylglucosamine 6-phosphate (GlcNAc6P). In terms of biological role, catalyzes the reversible isomerization-deamination of glucosamine 6-phosphate (GlcN6P) to form fructose 6-phosphate (Fru6P) and ammonium ion. This chain is Glucosamine-6-phosphate deaminase, found in Porphyromonas gingivalis (strain ATCC 33277 / DSM 20709 / CIP 103683 / JCM 12257 / NCTC 11834 / 2561).